The sequence spans 313 residues: Malate dehydrogenase (313 aa).

NAD(+) contacts are provided by residues 8–13 (GAGNVG) and Asp33. 2 residues coordinate substrate: Arg83 and Arg89. NAD(+)-binding positions include Asn96 and 119-121 (ISN). Asn121 and Arg152 together coordinate substrate. His176 acts as the Proton acceptor in catalysis.

This sequence belongs to the LDH/MDH superfamily. MDH type 3 family.

It catalyses the reaction (S)-malate + NAD(+) = oxaloacetate + NADH + H(+). Catalyzes the reversible oxidation of malate to oxaloacetate. The polypeptide is Malate dehydrogenase (Bacteroides thetaiotaomicron (strain ATCC 29148 / DSM 2079 / JCM 5827 / CCUG 10774 / NCTC 10582 / VPI-5482 / E50)).